We begin with the raw amino-acid sequence, 300 residues long: uncharacterized protein (300 aa).

This is an uncharacterized protein from Ictalurid herpesvirus 1 (strain Auburn) (IcHV-1).